Here is a 204-residue protein sequence, read N- to C-terminus: Ribosomal RNA small subunit methyltransferase G (204 aa).

S-adenosyl-L-methionine-binding positions include glycine 74, leucine 79, 125–126, and arginine 138; that span reads AY.

The protein belongs to the methyltransferase superfamily. RNA methyltransferase RsmG family.

The protein resides in the cytoplasm. Specifically methylates the N7 position of a guanine in 16S rRNA. This is Ribosomal RNA small subunit methyltransferase G from Brachyspira hyodysenteriae (strain ATCC 49526 / WA1).